The sequence spans 1471 residues: ABC multidrug transporter F (1471 aa).

The span at M1–E19 shows a compositional bias: polar residues. The segment at M1–E40 is disordered. N-linked (GlcNAc...) asparagine glycosylation occurs at N4. A compositionally biased stretch (basic and acidic residues) spans G25–E40. N-linked (GlcNAc...) asparagine glycans are attached at residues N71 and N311. An ABC transporter 1 domain is found at L133–E387. Residues V498–Y518 traverse the membrane as a helical segment. N-linked (GlcNAc...) asparagine glycosylation is present at N519. Helical transmembrane passes span A532–L552, F578–F598, G607–F627, L641–V661, and I751–A771. Positions R791–V819 are disordered. An ABC transporter 2 domain is found at F829–G1071. N842 carries N-linked (GlcNAc...) asparagine glycosylation. Residue G865–T872 coordinates ATP. The next 5 membrane-spanning stretches (helical) occupy residues Y1167–F1187, F1201–F1221, F1252–L1272, L1288–I1308, and I1326–I1346. N-linked (GlcNAc...) asparagine glycans are attached at residues N1386, N1422, and N1429. Residues F1441 to L1461 form a helical membrane-spanning segment.

The protein belongs to the ABC transporter superfamily. ABCG family. PDR (TC 3.A.1.205) subfamily.

The protein resides in the cell membrane. The enzyme catalyses fluconazole(in) + ATP + H2O = fluconazole(out) + ADP + phosphate + H(+). The catalysed reaction is itraconazole(in) + ATP + H2O = itraconazole(out) + ADP + phosphate + H(+). The efflux inhibitor FK506 impairs the transport activity. In terms of biological role, pleiotropic ABC efflux transporter that shows a strong substrate specificity for the azole class of drugs such as lotrimazole (CLT), fluconazole (FLC), itraconazole (ITC), ketoconazole (KTC), posaconazole (POS), econazole (ECON), metconazole (MET), miconazole (MCZ), prochloraz (PCLZ), and tebuconazole (TEBZ). This is ABC multidrug transporter F from Aspergillus fumigatus (strain ATCC MYA-4609 / CBS 101355 / FGSC A1100 / Af293) (Neosartorya fumigata).